Here is a 331-residue protein sequence, read N- to C-terminus: Ketol-acid reductoisomerase (NADP(+)) (331 aa).

One can recognise a KARI N-terminal Rossmann domain in the interval 2–181 (LEKYYDKDAD…GATRAVVFET (180 aa)). Residues 25–28 (YGSQ), R48, S52, and 82–85 (DEQQ) contribute to the NADP(+) site. H107 is an active-site residue. Residue G133 participates in NADP(+) binding. In terms of domain architecture, KARI C-terminal knotted spans 182 to 327 (SFREETETDL…KEIRATMPQF (146 aa)). The Mg(2+) site is built by D190, E194, E226, and E230. S251 lines the substrate pocket.

The protein belongs to the ketol-acid reductoisomerase family. Mg(2+) serves as cofactor.

The enzyme catalyses (2R)-2,3-dihydroxy-3-methylbutanoate + NADP(+) = (2S)-2-acetolactate + NADPH + H(+). It carries out the reaction (2R,3R)-2,3-dihydroxy-3-methylpentanoate + NADP(+) = (S)-2-ethyl-2-hydroxy-3-oxobutanoate + NADPH + H(+). It participates in amino-acid biosynthesis; L-isoleucine biosynthesis; L-isoleucine from 2-oxobutanoate: step 2/4. The protein operates within amino-acid biosynthesis; L-valine biosynthesis; L-valine from pyruvate: step 2/4. Its function is as follows. Involved in the biosynthesis of branched-chain amino acids (BCAA). Catalyzes an alkyl-migration followed by a ketol-acid reduction of (S)-2-acetolactate (S2AL) to yield (R)-2,3-dihydroxy-isovalerate. In the isomerase reaction, S2AL is rearranged via a Mg-dependent methyl migration to produce 3-hydroxy-3-methyl-2-ketobutyrate (HMKB). In the reductase reaction, this 2-ketoacid undergoes a metal-dependent reduction by NADPH to yield (R)-2,3-dihydroxy-isovalerate. The sequence is that of Ketol-acid reductoisomerase (NADP(+)) from Methanospirillum hungatei JF-1 (strain ATCC 27890 / DSM 864 / NBRC 100397 / JF-1).